A 393-amino-acid chain; its full sequence is 4-hydroxyphenylpyruvate dioxygenase (393 aa).

Thr-2 bears the N-acetylthreonine mark. VOC domains follow at residues 18-149 (HFHS…LVEK) and 180-338 (IIDH…IFTK). Lys-132 bears the N6-succinyllysine mark. A Fe cation-binding site is contributed by His-183. Residues Ser-211, Ser-226, and Ser-250 each carry the phosphoserine modification. Residues His-266 and Glu-349 each coordinate Fe cation.

This sequence belongs to the 4HPPD family. In terms of assembly, homodimer. Fe cation is required as a cofactor.

It localises to the cytoplasm. The protein localises to the endoplasmic reticulum membrane. Its subcellular location is the golgi apparatus membrane. The enzyme catalyses 3-(4-hydroxyphenyl)pyruvate + O2 = homogentisate + CO2. Its pathway is amino-acid degradation; L-phenylalanine degradation; acetoacetate and fumarate from L-phenylalanine: step 3/6. Its function is as follows. Catalyzes the conversion of 4-hydroxyphenylpyruvic acid to homogentisic acid, one of the steps in tyrosine catabolism. The protein is 4-hydroxyphenylpyruvate dioxygenase (Hpd) of Rattus norvegicus (Rat).